Consider the following 291-residue polypeptide: 4-hydroxy-tetrahydrodipicolinate synthase (291 aa).

Residue T44 participates in pyruvate binding. The Proton donor/acceptor role is filled by Y132. The Schiff-base intermediate with substrate role is filled by K160. V202 lines the pyruvate pocket.

It belongs to the DapA family. As to quaternary structure, homotetramer; dimer of dimers.

The protein localises to the cytoplasm. The enzyme catalyses L-aspartate 4-semialdehyde + pyruvate = (2S,4S)-4-hydroxy-2,3,4,5-tetrahydrodipicolinate + H2O + H(+). Its pathway is amino-acid biosynthesis; L-lysine biosynthesis via DAP pathway; (S)-tetrahydrodipicolinate from L-aspartate: step 3/4. In terms of biological role, catalyzes the condensation of (S)-aspartate-beta-semialdehyde [(S)-ASA] and pyruvate to 4-hydroxy-tetrahydrodipicolinate (HTPA). The polypeptide is 4-hydroxy-tetrahydrodipicolinate synthase (Clostridium perfringens (strain ATCC 13124 / DSM 756 / JCM 1290 / NCIMB 6125 / NCTC 8237 / Type A)).